The primary structure comprises 196 residues: Imidazole glycerol phosphate synthase subunit HisH (196 aa).

Positions Asn2–Met196 constitute a Glutamine amidotransferase type-1 domain. Cys77 (nucleophile) is an active-site residue. Catalysis depends on residues His178 and Glu180.

In terms of assembly, heterodimer of HisH and HisF.

Its subcellular location is the cytoplasm. It catalyses the reaction 5-[(5-phospho-1-deoxy-D-ribulos-1-ylimino)methylamino]-1-(5-phospho-beta-D-ribosyl)imidazole-4-carboxamide + L-glutamine = D-erythro-1-(imidazol-4-yl)glycerol 3-phosphate + 5-amino-1-(5-phospho-beta-D-ribosyl)imidazole-4-carboxamide + L-glutamate + H(+). It carries out the reaction L-glutamine + H2O = L-glutamate + NH4(+). It functions in the pathway amino-acid biosynthesis; L-histidine biosynthesis; L-histidine from 5-phospho-alpha-D-ribose 1-diphosphate: step 5/9. Its function is as follows. IGPS catalyzes the conversion of PRFAR and glutamine to IGP, AICAR and glutamate. The HisH subunit catalyzes the hydrolysis of glutamine to glutamate and ammonia as part of the synthesis of IGP and AICAR. The resulting ammonia molecule is channeled to the active site of HisF. The polypeptide is Imidazole glycerol phosphate synthase subunit HisH (Shigella flexneri).